A 593-amino-acid polypeptide reads, in one-letter code: Methionine--tRNA ligase, mitochondrial (593 aa).

The N-terminal 29 residues, 1 to 29, are a transit peptide targeting the mitochondrion; it reads MLRVSAFRLLGRRGASRVSLLEDFSFRYY. The short motif at 52–62 is the 'HIGH' region element; that stretch reads FYVNAAPHIGH. A 'KMSKS' region motif is present at residues 347–351; the sequence is KMSKS. An ATP-binding site is contributed by Lys350.

Belongs to the class-I aminoacyl-tRNA synthetase family.

It is found in the mitochondrion matrix. It carries out the reaction tRNA(Met) + L-methionine + ATP = L-methionyl-tRNA(Met) + AMP + diphosphate. This Bos taurus (Bovine) protein is Methionine--tRNA ligase, mitochondrial (MARS2).